The sequence spans 245 residues: UDP-2,3-diacylglucosamine hydrolase (245 aa).

Residues Asp8, His10, Asp41, Asn79, and His114 each contribute to the Mn(2+) site. 79-80 (NR) lines the substrate pocket. The substrate site is built by Asp122, Ser160, Lys164, Lys167, and His195. Mn(2+) contacts are provided by His195 and His197.

The protein belongs to the LpxH family. Mn(2+) serves as cofactor.

The protein resides in the cell inner membrane. The catalysed reaction is UDP-2-N,3-O-bis[(3R)-3-hydroxytetradecanoyl]-alpha-D-glucosamine + H2O = 2-N,3-O-bis[(3R)-3-hydroxytetradecanoyl]-alpha-D-glucosaminyl 1-phosphate + UMP + 2 H(+). It functions in the pathway glycolipid biosynthesis; lipid IV(A) biosynthesis; lipid IV(A) from (3R)-3-hydroxytetradecanoyl-[acyl-carrier-protein] and UDP-N-acetyl-alpha-D-glucosamine: step 4/6. Hydrolyzes the pyrophosphate bond of UDP-2,3-diacylglucosamine to yield 2,3-diacylglucosamine 1-phosphate (lipid X) and UMP by catalyzing the attack of water at the alpha-P atom. Involved in the biosynthesis of lipid A, a phosphorylated glycolipid that anchors the lipopolysaccharide to the outer membrane of the cell. The sequence is that of UDP-2,3-diacylglucosamine hydrolase from Aromatoleum aromaticum (strain DSM 19018 / LMG 30748 / EbN1) (Azoarcus sp. (strain EbN1)).